Consider the following 57-residue polypeptide: Large ribosomal subunit protein bL32 (57 aa).

This sequence belongs to the bacterial ribosomal protein bL32 family.

This chain is Large ribosomal subunit protein bL32, found in Corynebacterium glutamicum (strain R).